The following is a 479-amino-acid chain: FAD-dependent monooxygenase atmM (479 aa).

The chain crosses the membrane as a helical span at residues 10–30 (IIVGGSVAGLTLAHCLQRAGI). The FAD site is built by glutamate 36, glycine 50, arginine 109, aspartate 309, and alanine 322. Residues 445–465 (WILVLLVIVVSFGLHSPELVI) traverse the membrane as a helical segment.

It belongs to the paxM FAD-dependent monooxygenase family. It depends on FAD as a cofactor.

It is found in the membrane. Its pathway is secondary metabolite biosynthesis. Functionally, FAD-dependent monooxygenase; part of the ATM1 gene cluster that mediates the biosynthesis of aflatrem, a tremorgenic mycotoxin with acute neurotoxic effects. Synthesis of geranylgeranyl diphosphate (GGPP) by AtmG (a GGPP synthase) precedes condensation of GGPP with indole 3-glycerol phosphate, followed by epoxidation and cyclization by AtmM (a FAD-dependent monooxygenase) and AtmC (a prenyltransferase) to produce paspaline. AtmB is also essential for paspaline production, but its exact role has not been identified yet. AtmP, a cytochrome P450 monooxygenase, subsequently converts paspaline to 13-desoxypaxilline via PC-M6 by removal of the C-30 methyl group and oxidation at C-10. AtmQ, a cytochrome P450 monooxygenase, then catalyzes the oxidation of 13-desoxypaxilline, first at C-7 to produce paspalicine and then at C-13 to form paspalinine. Finally, AtmD prenylates paspalinine to form aflatrem. The polypeptide is FAD-dependent monooxygenase atmM (Aspergillus flavus).